Reading from the N-terminus, the 536-residue chain is Trigger factor (536 aa).

Positions 164-249 (GDQVIIDFAG…VKEVKVPAAT (86 aa)) constitute a PPIase FKBP-type domain. Positions 439–536 (IEADDDSGHV…APAKKAAAKK (98 aa)) are disordered. Residues 472-502 (TKKEAVKDEAKAEEAPAKKAPAKKAEPKAEA) are compositionally biased toward basic and acidic residues. Low complexity predominate over residues 503-515 (KPAAAKKAAPAKA). The span at 516–525 (AAEEKAEPAK) shows a compositional bias: basic and acidic residues. Residues 527–536 (APAKKAAAKK) show a composition bias toward basic residues.

It belongs to the FKBP-type PPIase family. Tig subfamily.

The protein localises to the cytoplasm. It carries out the reaction [protein]-peptidylproline (omega=180) = [protein]-peptidylproline (omega=0). Its function is as follows. Involved in protein export. Acts as a chaperone by maintaining the newly synthesized protein in an open conformation. Functions as a peptidyl-prolyl cis-trans isomerase. The polypeptide is Trigger factor (Sphingopyxis alaskensis (strain DSM 13593 / LMG 18877 / RB2256) (Sphingomonas alaskensis)).